A 396-amino-acid polypeptide reads, in one-letter code: tRNA (guanine-N(7)-)-methyltransferase non-catalytic subunit wuho (396 aa).

WD repeat units follow at residues 75 to 115, 162 to 201, 205 to 243, and 302 to 342; these read KVEV…AQLL, GHLSIVYDVLWSEDQQYIITCDRDDKIRVTNYPATFDIHS, GHKEFVSGLAMLTEQHIISASGDKTLRVWNYTCGKELLL, and AGTW…RASG.

The protein belongs to the WD repeat TRM82 family. Forms a heterodimer with the catalytic subunit Mettl1. Interacts with mei-P26 and weakly interacts with bgcn; required for the function or formation of the mei-P26-bgcn-bam-sxl complex. Interacts with nanos; may be involved in mei-P26-dependent derepression of the BMP signaling pathway. Interacts with Myc; the interaction may be mediated by mei-P26 and may be involved in the regulation of ribosome biogenesis. In testis, it is present at high level in hub cells, a niche for germline stem cells of testis. Ubiquitously expressed in all testicular cells throughout spermatogenesis. Ubiquitously expressed in all germline and somatic cells of the ovary.

The protein resides in the nucleus. The protein localises to the cytoplasm. It participates in tRNA modification; N(7)-methylguanine-tRNA biosynthesis. Its function is as follows. Required for the Mettl1-dependent formation of N(7)-methylguanine at position 46 (m7G46) in tRNA. In the Mettl1-wuho methyltransferase complex, it is required to stabilize and induce conformational changes of the catalytic subunit. Required for binding of nanos mRNA and repression of translation by the mei-P26-bgcn-bam-sxl complex. May cooperate with mei-P26 and nanos to derepress the BMP signaling pathway. May cooperate with mei-P26 to suppress expression of a subset of microRNAs. May cooperate with mei-P26 to regulate bam expression levels in germline cells during gametogenesis. Required to promote mitosis to meiosis transition during gametogenesis. May regulate germline cell division in part by regulating ribosome biogenesis. The polypeptide is tRNA (guanine-N(7)-)-methyltransferase non-catalytic subunit wuho (Drosophila pseudoobscura pseudoobscura (Fruit fly)).